The chain runs to 488 residues: Prostaglandin E2 receptor EP4 subtype (488 aa).

Residues 1 to 19 (MSIPGVNASFSSTPERLNS) are Extracellular-facing. Residue asparagine 7 is glycosylated (N-linked (GlcNAc...) asparagine). The helical transmembrane segment at 20–43 (PVTIPAVMFIFGVVGNLVAIVVLC) threads the bilayer. At 44–55 (KSRKEQKETTFY) the chain is on the cytoplasmic side. The chain crosses the membrane as a helical span at residues 56–79 (TLVCGLAVTDLLGTLLVSPVTIAT). At 80–96 (YMKGQWPGDQALCDYST) the chain is on the extracellular side. Cysteine 92 and cysteine 170 are disulfide-bonded. A helical transmembrane segment spans residues 97 to 115 (FILLFFGLSGLSIICAMSI). Residues 116–135 (ERYLAINHAYFYSHYVDKRL) are Cytoplasmic-facing. The helical transmembrane segment at 136-160 (AGLTLFAVYASNVLFCALPNMGLGR) threads the bilayer. At 161–184 (SERQYPGTWCFIDWTTNVTAYAAF) the chain is on the extracellular side. The helical transmembrane segment at 185–211 (SYMYAGFSSFLILATVLCNVLVCGALL) threads the bilayer. The Cytoplasmic portion of the chain corresponds to 212–270 (RMLRQFMRRTSLGTEQHHAAAAAAVASVACRGHAAASPALQRLSDFRRRRSFRRIAGAE). A helical transmembrane segment spans residues 271-298 (IQMVILLIATSLVVLICSIPLVVRVFIN). The Extracellular segment spans residues 299–315 (QLYQPSVVKDISRNPDL). A helical transmembrane segment spans residues 316-335 (QAIRIASVNPILDPWIYILL). The Cytoplasmic portion of the chain corresponds to 336–488 (RKTVLSKAIE…ETLKLSEKCI (153 aa)). A disordered region spans residues 358–380 (GRDGSAQHCSESRRTSSAMSGHS). Serine 377, serine 380, serine 382, and serine 385 each carry phosphoserine.

The protein belongs to the G-protein coupled receptor 1 family. In terms of assembly, interacts with FEM1A. Post-translationally, phosphorylation mediates agonist-mediated desensitization by promoting cytoplasmic retention.

Its subcellular location is the cell membrane. In terms of biological role, receptor for prostaglandin E2 (PGE2). The activity of this receptor is mediated by G(s) proteins that stimulate adenylate cyclase. Has a relaxing effect on smooth muscle. May play an important role in regulating renal hemodynamics, intestinal epithelial transport, adrenal aldosterone secretion, and uterine function. The polypeptide is Prostaglandin E2 receptor EP4 subtype (Ptger4) (Rattus norvegicus (Rat)).